Consider the following 323-residue polypeptide: tRNA(Ile)-lysidine synthase (323 aa).

An ATP-binding site is contributed by 33–38 (SGGSDS).

This sequence belongs to the tRNA(Ile)-lysidine synthase family.

It localises to the cytoplasm. The catalysed reaction is cytidine(34) in tRNA(Ile2) + L-lysine + ATP = lysidine(34) in tRNA(Ile2) + AMP + diphosphate + H(+). Ligates lysine onto the cytidine present at position 34 of the AUA codon-specific tRNA(Ile) that contains the anticodon CAU, in an ATP-dependent manner. Cytidine is converted to lysidine, thus changing the amino acid specificity of the tRNA from methionine to isoleucine. The sequence is that of tRNA(Ile)-lysidine synthase from Mycobacterium leprae (strain TN).